A 187-amino-acid polypeptide reads, in one-letter code: Chlorobenzene dioxygenase subunit beta (187 aa).

The protein belongs to the bacterial ring-hydroxylating dioxygenase beta subunit family. This dioxygenase system consists of four proteins: the two subunits of the oxygenase component (TecA1 and TecA2), a ferredoxin (TecA3) and a ferredoxin reductase (TecA4).

It catalyses the reaction chlorobenzene + NADH + O2 + H(+) = (1R,2R)-3-chlorocyclohexa-3,5-diene-1,2-diol + NAD(+). It functions in the pathway aromatic compound metabolism. Functionally, part of the oxygenase component of the chlorobenzene dioxygenase system that catalyzes the dihydroxylation of a range of aromatic compounds, including chlorinated benzenes and toluenes, and dinuclear aromatics such as biphenyl and dibenzo-p-dioxin. The beta subunit is not directly involved in the control of substrate specificity. The sequence is that of Chlorobenzene dioxygenase subunit beta from Cupriavidus sp. (strain PS12).